The sequence spans 546 residues: Thermosome subunit beta (546 aa).

This sequence belongs to the TCP-1 chaperonin family. As to quaternary structure, forms a Heterooligomeric complex of two stacked eight-membered rings.

Its function is as follows. Molecular chaperone; binds unfolded polypeptides in vitro, and has a weak ATPase activity. This Thermococcus kodakarensis (strain ATCC BAA-918 / JCM 12380 / KOD1) (Pyrococcus kodakaraensis (strain KOD1)) protein is Thermosome subunit beta (thsB).